The sequence spans 147 residues: Large ribosomal subunit protein bL9 (147 aa).

It belongs to the bacterial ribosomal protein bL9 family.

In terms of biological role, binds to the 23S rRNA. In Campylobacter jejuni subsp. doylei (strain ATCC BAA-1458 / RM4099 / 269.97), this protein is Large ribosomal subunit protein bL9.